The sequence spans 360 residues: Ribosomal RNA large subunit methyltransferase M (360 aa).

S-adenosyl-L-methionine-binding positions include Ser192, 225–228, Asp244, Asp264, and Asp280; that span reads APGG. Lys309 functions as the Proton acceptor in the catalytic mechanism.

Belongs to the class I-like SAM-binding methyltransferase superfamily. RNA methyltransferase RlmE family. RlmM subfamily. In terms of assembly, monomer.

The protein localises to the cytoplasm. The catalysed reaction is cytidine(2498) in 23S rRNA + S-adenosyl-L-methionine = 2'-O-methylcytidine(2498) in 23S rRNA + S-adenosyl-L-homocysteine + H(+). Its function is as follows. Catalyzes the 2'-O-methylation at nucleotide C2498 in 23S rRNA. This chain is Ribosomal RNA large subunit methyltransferase M, found in Alkalilimnicola ehrlichii (strain ATCC BAA-1101 / DSM 17681 / MLHE-1).